The chain runs to 471 residues: Heat shock 70 kDa protein 13 (471 aa).

Positions 1 to 22 (MAREMTILGSAVLTLLLAGYLA) are cleaved as a signal peptide. The span at 315–341 (EQDRKEPHSSDTELPKDKLSSADDHRV) shows a compositional bias: basic and acidic residues. Positions 315–352 (EQDRKEPHSSDTELPKDKLSSADDHRVNSGFGRGLSDK) are disordered.

It belongs to the heat shock protein 70 family. Binds UBQLN2. Constitutively expressed in all tissues.

It is found in the microsome. It localises to the endoplasmic reticulum. In terms of biological role, has peptide-independent ATPase activity. This is Heat shock 70 kDa protein 13 (HSPA13) from Homo sapiens (Human).